Consider the following 340-residue polypeptide: Nesprin-4 (340 aa).

2 disordered regions span residues 1 to 86 (MAQF…DGGK) and 254 to 277 (HRRR…DAML). Over 1–291 (MAQFPLLGHG…GVPAPASRRP (291 aa)) the chain is Cytoplasmic. Over residues 53 to 63 (APEHFMDEPKS) the composition is skewed to basic and acidic residues. A KASH domain is found at 283–340 (VPAPASRRPLTFLLLLLFLLLVGATLLLPLSGVPCCSHTRLARTPYLVLSYVNGLPPI). Residues 292-312 (LTFLLLLLFLLLVGATLLLPL) form a helical; Anchor for type IV membrane protein membrane-spanning segment. Over 313-340 (SGVPCCSHTRLARTPYLVLSYVNGLPPI) the chain is Perinuclear space.

Belongs to the nesprin family. In terms of assembly, core component of LINC complexes which are composed of inner nuclear membrane SUN domain-containing proteins coupled to outer nuclear membrane KASH domain-containing nesprins. SUN and KASH domain-containing proteins seem to bind each other promiscuously; however, differentially expression of LINC complex constituents can give rise to specific assemblies. Probably part of a SUN1-containing LINC complex. Interacts with kinesins KIF5B and KLC1.

Its subcellular location is the nucleus outer membrane. Functionally, as a component of the LINC (LInker of Nucleoskeleton and Cytoskeleton) complex, involved in the connection between the nuclear lamina and the cytoskeleton. The nucleocytoplasmic interactions established by the LINC complex play an important role in the transmission of mechanical forces across the nuclear envelope and in nuclear movement and positioning. Behaves as a kinesin cargo, providing a functional binding site for kinesin-1 at the nuclear envelope. Hence may contribute to the establishment of secretory epithelial morphology, by promoting kinesin-dependent apical migration of the centrosome and Golgi apparatus and basal localization of the nucleus. This is Nesprin-4 (Syne4) from Rattus norvegicus (Rat).